A 410-amino-acid polypeptide reads, in one-letter code: Neurotensin receptor type 2 (410 aa).

The Extracellular segment spans residues 1–32; the sequence is METSSPRPPRPSSNPGLSLDARLGVDTRLWAK. Residues 33–55 traverse the membrane as a helical segment; that stretch reads VLFTALYALIWALGAAGNALSAH. The Cytoplasmic segment spans residues 56–64; the sequence is VVLKARAGR. The chain crosses the membrane as a helical span at residues 65–87; sequence AGRLRHHVLSLALAGLLLLLVGV. Residues 88 to 109 are Extracellular-facing; sequence PVELYSFVWFHYPWVFGDLGCR. An intrachain disulfide couples Cys-108 to Cys-194. The chain crosses the membrane as a helical span at residues 110–131; the sequence is GYYFVHELCAYATVLSVAGLSA. The Cytoplasmic portion of the chain corresponds to 132–154; that stretch reads ERCLAVCQPLRARSLLTPRRTRW. The helical transmembrane segment at 155-176 threads the bilayer; it reads LVALSWAASLGLALPMAVIMGQ. At 177–217 the chain is on the extracellular side; sequence KHELETADGEPEPASRVCTVLVSRTALQVFIQVNVLVSFVL. A helical transmembrane segment spans residues 218 to 237; it reads PLALTAFLNGVTVSHLLALC. Over 238 to 297 the chain is Cytoplasmic; the sequence is SQVPSTSTPGSSTPSRLELLSEEGLLSFIVWKKTFIQGGQVSLVRHKDVRRIRSLQRSVQ. Residues 298–318 form a helical membrane-spanning segment; sequence VLRAIVVMYVICWLPYHARRL. Residues 319–337 lie on the Extracellular side of the membrane; sequence MYCYVPDDAWTDPLYNFYH. A helical transmembrane segment spans residues 338–358; that stretch reads YFYMVTNTLFYVSSAVTPLLY. Residues 359 to 410 are Cytoplasmic-facing; sequence NAVSSSFRKLFLEAVSSLCGEHHPMKRLPPKPQSPTLMDTASGFGDPPETRT. Cys-377 carries S-palmitoyl cysteine lipidation. The tract at residues 381 to 410 is disordered; that stretch reads HPMKRLPPKPQSPTLMDTASGFGDPPETRT.

Belongs to the G-protein coupled receptor 1 family. Neurotensin receptor subfamily. NTSR2 sub-subfamily. Expressed in prostate (at protein level).

It is found in the cell membrane. Functionally, receptor for the tridecapeptide neurotensin. It is associated with G proteins that activate a phosphatidylinositol-calcium second messenger system. The sequence is that of Neurotensin receptor type 2 (NTSR2) from Homo sapiens (Human).